Reading from the N-terminus, the 870-residue chain is Aldehyde-alcohol dehydrogenase 2 (870 aa).

Cysteine 252 is a catalytic residue. Position 431 to 436 (431 to 436) interacts with NAD(+); the sequence is GCGSYG.

The protein in the N-terminal section; belongs to the aldehyde dehydrogenase family. This sequence in the C-terminal section; belongs to the iron-containing alcohol dehydrogenase family. In terms of assembly, seems to form a rod shaped homomer composed of at least 20 identical subunits. Zn(2+) serves as cofactor. Requires Fe(2+) as cofactor.

The catalysed reaction is a primary alcohol + NAD(+) = an aldehyde + NADH + H(+). It carries out the reaction a secondary alcohol + NAD(+) = a ketone + NADH + H(+). The enzyme catalyses acetaldehyde + NAD(+) + CoA = acetyl-CoA + NADH + H(+). This enzyme has two NAD(+)-dependent activities: ADH and ACDH. May be a critical enzyme in the fermentative pathway. The sequence is that of Aldehyde-alcohol dehydrogenase 2 (ADH2) from Entamoeba histolytica (strain ATCC 30459 / HM-1:IMSS / ABRM).